The sequence spans 62 residues: Large ribosomal subunit protein bL28 (62 aa).

It belongs to the bacterial ribosomal protein bL28 family.

The polypeptide is Large ribosomal subunit protein bL28 (Staphylococcus haemolyticus (strain JCSC1435)).